The sequence spans 270 residues: Flavin-dependent thymidylate synthase (270 aa).

Residues 13-218 (GFVRLVDQMG…PLAWAAFEEH (206 aa)) form the ThyX domain. Residues Ser59, 82–84 (RHR), and Glu90 each bind FAD. Residues 79-82 (QWFR), 90-94 (EISGR), and Arg157 contribute to the dUMP site. The short motif at 82–92 (RHRTASVNEIS) is the ThyX motif element. FAD-binding positions include 173 to 175 (DLH) and His179. Arg184 serves as a coordination point for dUMP. Catalysis depends on Arg184, which acts as the Involved in ionization of N3 of dUMP, leading to its activation.

The protein belongs to the thymidylate synthase ThyX family. As to quaternary structure, homotetramer. FAD serves as cofactor.

The catalysed reaction is dUMP + (6R)-5,10-methylene-5,6,7,8-tetrahydrofolate + NADPH + H(+) = dTMP + (6S)-5,6,7,8-tetrahydrofolate + NADP(+). The protein operates within pyrimidine metabolism; dTTP biosynthesis. Catalyzes the reductive methylation of 2'-deoxyuridine-5'-monophosphate (dUMP) to 2'-deoxythymidine-5'-monophosphate (dTMP) while utilizing 5,10-methylenetetrahydrofolate (mTHF) as the methyl donor, and NADPH and FADH(2) as the reductant. The polypeptide is Flavin-dependent thymidylate synthase (Thermus thermophilus (strain ATCC 27634 / DSM 579 / HB8)).